A 749-amino-acid chain; its full sequence is Activating signal cointegrator 1 complex subunit 2 (749 aa).

Positions 1–26 (MPALPLDQLQITHKDPKTGQPKTSAA) are disordered. Thr-233 bears the Phosphothreonine mark. The CUE domain maps to 465-508 (ELDSLISQVKDLLPDLGEGFILACLEHYSYDSEQVINNILEDRL). Disordered stretches follow at residues 606-675 (EDEY…QDPA) and 689-749 (LARK…MIPS). At Ser-625 the chain carries Phosphoserine. Residues 649–662 (VQEEEWDEEDEVEE) are compositionally biased toward acidic residues. 2 stretches are compositionally biased toward basic and acidic residues: residues 663 to 675 (EAPKPDHFIQDPA) and 711 to 726 (QSRETTQERRKKEANK).

This sequence belongs to the ASCC2 family. As to quaternary structure, identified in the ASCC complex that contains ASCC1, ASCC2 and ASCC3. Interacts directly with ASCC3. The ASCC complex interacts with ALKBH3. Interacts (via CUE domain) with 'Lys-63'-linked polyubiquitin chains, but not with 'Lys-48'-linked polyubiquitin chains. Part of the ASC-1 complex, that contains TRIP4, ASCC1, ASCC2 and ASCC3. Component of the RQT (ribosome quality control trigger) complex, that contains ASCC2, ASCC3 and TRIP4. Interacts with CSRP1. Interacts with PRPF8, a component of the spliceosome. Interacts with ZCCHC4.

It is found in the nucleus. The protein resides in the nucleus speckle. Its function is as follows. Ubiquitin-binding protein involved in DNA repair and rescue of stalled ribosomes. Plays a role in DNA damage repair as component of the ASCC complex. Recruits ASCC3 and ALKBH3 to sites of DNA damage by binding to polyubiquitinated proteins that have 'Lys-63'-linked polyubiquitin chains. Part of the ASC-1 complex that enhances NF-kappa-B, SRF and AP1 transactivation. Involved in activation of the ribosome quality control (RQC) pathway, a pathway that degrades nascent peptide chains during problematic translation. Specifically recognizes and binds RPS20/uS10 ubiquitinated by ZNF598, promoting recruitment of the RQT (ribosome quality control trigger) complex on stalled ribosomes, followed by disassembly of stalled ribosomes. This chain is Activating signal cointegrator 1 complex subunit 2 (Ascc2), found in Mus musculus (Mouse).